Reading from the N-terminus, the 235-residue chain is Ribosome maturation factor RimM (235 aa).

Positions 1-19 (MKHEEANKEIGGRGAEGQR) are enriched in basic and acidic residues. Residues 1 to 49 (MKHEEANKEIGGRGAEGQRSKRVGGNSKIQNIQSPAPNPQPIVPNTQSP) form a disordered region. A PRC barrel domain is found at 150-230 (EDEYHVLDLI…RIEITPPPGL (81 aa)).

This sequence belongs to the RimM family. In terms of assembly, binds ribosomal protein uS19.

The protein localises to the cytoplasm. An accessory protein needed during the final step in the assembly of 30S ribosomal subunit, possibly for assembly of the head region. Essential for efficient processing of 16S rRNA. May be needed both before and after RbfA during the maturation of 16S rRNA. It has affinity for free ribosomal 30S subunits but not for 70S ribosomes. The polypeptide is Ribosome maturation factor RimM (Nostoc punctiforme (strain ATCC 29133 / PCC 73102)).